The primary structure comprises 294 residues: Cell division protein ZipA (294 aa).

A topological domain (periplasmic) is located at residue Met1. Residues 2–22 traverse the membrane as a helical segment; it reads EIGLREWLILIGIIVIAGILF. The Cytoplasmic portion of the chain corresponds to 23–294; sequence DGWRRMRGGK…FERRALTQKR (272 aa). The interval 47-107 is disordered; sequence PDEEGSAEVL…GKRAAEMQPQ (61 aa). Basic and acidic residues predominate over residues 82–91; it reads AREREREQKP.

It belongs to the ZipA family. As to quaternary structure, interacts with FtsZ via their C-terminal domains.

The protein resides in the cell inner membrane. Its function is as follows. Essential cell division protein that stabilizes the FtsZ protofilaments by cross-linking them and that serves as a cytoplasmic membrane anchor for the Z ring. Also required for the recruitment to the septal ring of downstream cell division proteins. The protein is Cell division protein ZipA of Pseudomonas putida (strain W619).